The primary structure comprises 251 residues: tRNA (guanine-N(1)-)-methyltransferase (251 aa).

Residues glycine 113 and 133–138 (IGDYVL) contribute to the S-adenosyl-L-methionine site.

It belongs to the RNA methyltransferase TrmD family. In terms of assembly, homodimer.

It is found in the cytoplasm. It carries out the reaction guanosine(37) in tRNA + S-adenosyl-L-methionine = N(1)-methylguanosine(37) in tRNA + S-adenosyl-L-homocysteine + H(+). Functionally, specifically methylates guanosine-37 in various tRNAs. This Methylococcus capsulatus (strain ATCC 33009 / NCIMB 11132 / Bath) protein is tRNA (guanine-N(1)-)-methyltransferase.